Reading from the N-terminus, the 418-residue chain is Glycine betaine transport ATP-binding protein OpuAA (418 aa).

Residues 34 to 270 (KTKKEILKAT…PSNEYVEKFV (237 aa)) form the ABC transporter domain. Residue 66–73 (GLSGSGKS) participates in ATP binding. CBS domains lie at 284 to 340 (IMKR…DLSL) and 344 to 403 (LNTE…INAE).

This sequence belongs to the ABC transporter superfamily. In terms of assembly, the complex is composed of two ATP-binding proteins (OpuAA), two transmembrane proteins (OpuAB) and a solute-binding protein (OpuAC).

It catalyses the reaction a quaternary ammonium(out) + ATP + H2O = a quaternary ammonium(in) + ADP + phosphate + H(+). Its function is as follows. Involved in a multicomponent binding-protein-dependent transport system for glycine betaine. Probably responsible for energy coupling to the transport system. This is Glycine betaine transport ATP-binding protein OpuAA (opuAA) from Bacillus subtilis (strain 168).